A 104-amino-acid chain; its full sequence is UPF0213 protein YsiG (104 aa).

The 78-residue stretch at 2-79 (NQYFTYILQC…KLVRKQKLSL (78 aa)) folds into the GIY-YIG domain.

The protein belongs to the UPF0213 family.

This Lactococcus lactis subsp. lactis (strain IL1403) (Streptococcus lactis) protein is UPF0213 protein YsiG (ysiG).